The following is a 738-amino-acid chain: Melanotransferrin (738 aa).

An N-terminal signal peptide occupies residues 1-19; sequence MRLLSVTFWLLLSLRTVVC. Transferrin-like domains follow at residues 23–357 and 366–706; these read VQWC…GLLC and LRWC…GMLS. 2 cysteine pairs are disulfide-bonded: cysteine 26-cysteine 63 and cysteine 36-cysteine 54. Fe(3+) is bound by residues aspartate 78 and tyrosine 107. An N-linked (GlcNAc...) asparagine glycan is attached at asparagine 118. Intrachain disulfides connect cysteine 130/cysteine 216, cysteine 172/cysteine 189, cysteine 186/cysteine 199, and cysteine 257/cysteine 271. Threonine 132 is a hydrogencarbonate binding site. An N-linked (GlcNAc...) asparagine glycan is attached at asparagine 135. Residues arginine 136, valine 138, and glycine 139 each coordinate hydrogencarbonate. Tyrosine 210 serves as a coordination point for Fe(3+). Residues histidine 279 and tyrosine 451 each contribute to the Fe(3+) site. Serine 462 is modified (phosphoserine). Asparagine 515 is a glycosylation site (N-linked (GlcNAc...) asparagine). Fe(3+) is bound by residues tyrosine 556 and histidine 625. Cysteine 709 carries GPI-anchor amidated cysteine lipidation. Residues 710–738 constitute a propeptide, removed in mature form; it reads SGAGAAVQRVPLLALLLLTLAAGLLPRVL.

It belongs to the transferrin family.

The protein resides in the cell membrane. In terms of biological role, involved in iron cellular uptake. Seems to be internalized and then recycled back to the cell membrane. Binds a single atom of iron per subunit. Could also bind zinc. This chain is Melanotransferrin (Meltf), found in Mus musculus (Mouse).